A 525-amino-acid polypeptide reads, in one-letter code: Packaging protein UL32 homolog (525 aa).

A compositionally biased stretch (polar residues) spans 1–12 (MAHKVTSANEPN). The tract at residues 1–20 (MAHKVTSANEPNPLTGKRLS) is disordered. 12 residues coordinate Zn(2+): Cys-95, Cys-98, His-173, Cys-179, Cys-255, Cys-256, Cys-357, Cys-360, His-427, Cys-434, Cys-473, and His-510. Zinc finger regions lie at residues 95–179 (CRVC…ICRC), 255–510 (CCHL…LRIH), and 357–434 (CPLC…DPLC).

This sequence belongs to the herpesviridae UL32 protein family.

Its subcellular location is the host cytoplasm. It localises to the host nucleus. Functionally, plays a role in efficient localization of neo-synthesized capsids to nuclear replication compartments, thereby controlling cleavage and packaging of virus genomic DNA. This chain is Packaging protein UL32 homolog, found in Epstein-Barr virus (strain B95-8) (HHV-4).